Consider the following 94-residue polypeptide: Cell division topological specificity factor (94 aa).

This sequence belongs to the MinE family.

Its function is as follows. Prevents the cell division inhibition by proteins MinC and MinD at internal division sites while permitting inhibition at polar sites. This ensures cell division at the proper site by restricting the formation of a division septum at the midpoint of the long axis of the cell. The sequence is that of Cell division topological specificity factor from Clostridioides difficile (strain 630) (Peptoclostridium difficile).